The chain runs to 366 residues: MIVTETIIRFENVTKQFDNDPPVLDNVSFEIEKGKFYTLLGPSGCGKTTILRLIAGFLEASEGQIYLGDKVINQIPANKRPVNTVFQDYALFPHLNVYENVAFGLRIKKLKKDAIDKKVQEALRFVNLKGYEKREISEMSGGQRQRVAIARAIVNEPEVILLDEPLSALDLKLRTEMQYELRDLQKRLGITFIFVTHDQEEALAMSDEIFVLNKGEIQQSGTPIDIYDEPINKFVADFIGESNIVNGKMIQDFEVEFVERRFECVDQGFRPNEVVEVVIRPEDLEITSAEKGKLQVTVDWMLFRGVHYEVGCIDIDGNEWLVHTTRKVRVGDKIGLAFEPEAIHVMRLGETEEEFDKRLDSYDEVQ.

An ABC transporter domain is found at 8–239 (IRFENVTKQF…PINKFVADFI (232 aa)). 41-48 (GPSGCGKT) contributes to the ATP binding site.

This sequence belongs to the ABC transporter superfamily. Spermidine/putrescine importer (TC 3.A.1.11.1) family. The complex is composed of two ATP-binding proteins (PotA), two transmembrane proteins (PotB and PotC) and a solute-binding protein (PotD).

It localises to the cell membrane. It catalyses the reaction ATP + H2O + polyamine-[polyamine-binding protein]Side 1 = ADP + phosphate + polyamineSide 2 + [polyamine-binding protein]Side 1.. Its function is as follows. Part of the ABC transporter complex PotABCD involved in spermidine/putrescine import. Responsible for energy coupling to the transport system. The protein is Spermidine/putrescine import ATP-binding protein PotA of Listeria innocua serovar 6a (strain ATCC BAA-680 / CLIP 11262).